A 325-amino-acid polypeptide reads, in one-letter code: VSG expression site-associated protein 117A (325 aa).

The N-terminal stretch at 1-23 is a signal peptide; that stretch reads MKVTIVELVVWLFSVNFFVVVAE. 3 N-linked (GlcNAc...) asparagine glycosylation sites follow: N72, N290, and N313.

Functionally, not known but may be related to activation of the variant surface glycoprotein genes. The chain is VSG expression site-associated protein 117A from Trypanosoma brucei brucei.